A 201-amino-acid chain; its full sequence is MSKPVEFEMLVDALKSLPGVGTKNAKKWAFFLLQQDQKYIDDFIKRIKDAKTNIIKCKYCSNFGNKDECDICSNDYRDFTKLMIVTTNEDLERIESANIYNGLYHITNGEVSLRKNVVIEHTNIKIIKERVLNGSFKEIIIATSYTHDGEVTADYIVKMLEDIKDIQIYRIGFGIPLNSSIDYADDETLKQSIANKRKIRI.

The C4-type zinc-finger motif lies at 57–72; the sequence is CKYCSNFGNKDECDIC. The Toprim domain maps to 80-176; it reads TKLMIVTTNE…QIYRIGFGIP (97 aa).

The protein belongs to the RecR family.

Functionally, may play a role in DNA repair. It seems to be involved in an RecBC-independent recombinational process of DNA repair. It may act with RecF and RecO. This chain is Recombination protein RecR, found in Ureaplasma urealyticum serovar 10 (strain ATCC 33699 / Western).